Here is a 622-residue protein sequence, read N- to C-terminus: Chaperone protein HscA homolog (622 aa).

This sequence belongs to the heat shock protein 70 family.

Its function is as follows. Chaperone involved in the maturation of iron-sulfur cluster-containing proteins. Has a low intrinsic ATPase activity which is markedly stimulated by HscB. The chain is Chaperone protein HscA homolog from Burkholderia ambifaria (strain MC40-6).